The following is a 58-amino-acid chain: Microcin J25 (58 aa).

Positions 1–37 are excised as a propeptide; sequence MIKHFHFNKLSSGKKNNVPSPAKGVIQIKKSASQLTK. Positions 38 to 45 form a cross-link, isoglutamyl glycine isopeptide (Gly-Glu); that stretch reads GGAGHVPE.

Its subcellular location is the secreted. Peptide antibiotic that functions through inhibition of the bacterial DNA-dependent RNA polymerase (RNAP). Inhibits transcription by binding deep within RNAP secondary channel, where it sterically blocks the folding of the trigger loop, which is essential for efficient catalysis. In addition, it also seems to restrict access of nucleotide substrates to the catalytic center, and shows a partially competitive mode of inhibition with them. Exhibits potent bacteriocidal activity against a range of Enterobacteriaceae, including several pathogenic E.coli, Salmonella and Shigella strains. Also acts on the cytoplasmic membrane of Salmonella newport, producing alteration of membrane permeability and disruption of the subsequent gradient dissipation, which inhibits several processes essential for cell viability, such as oxygen consumption. Induces bacterial filamentation in susceptible cells in a non-SOS-dependent way, but this phenotype may result from impaired transcription of genes coding for cell division proteins. This is Microcin J25 (mcjA) from Escherichia coli.